A 378-amino-acid chain; its full sequence is Chaperone protein DnaJ (378 aa).

One can recognise a J domain in the interval 5-69; sequence EYYDRLGVSK…QKRAAYDQYG (65 aa). A CR-type zinc finger spans residues 134-216; sequence GVEKEVSYNR…CHGTGHEKQA (83 aa). 8 residues coordinate Zn(2+): cysteine 147, cysteine 150, cysteine 164, cysteine 167, cysteine 190, cysteine 193, cysteine 204, and cysteine 207. CXXCXGXG motif repeat units follow at residues 147–154, 164–171, 190–197, and 204–211; these read CGTCLGSG, CRKCHGSG, CDICHGSG, and CQTCHGTG.

It belongs to the DnaJ family. In terms of assembly, homodimer. It depends on Zn(2+) as a cofactor.

Its subcellular location is the cytoplasm. Functionally, participates actively in the response to hyperosmotic and heat shock by preventing the aggregation of stress-denatured proteins and by disaggregating proteins, also in an autonomous, DnaK-independent fashion. Unfolded proteins bind initially to DnaJ; upon interaction with the DnaJ-bound protein, DnaK hydrolyzes its bound ATP, resulting in the formation of a stable complex. GrpE releases ADP from DnaK; ATP binding to DnaK triggers the release of the substrate protein, thus completing the reaction cycle. Several rounds of ATP-dependent interactions between DnaJ, DnaK and GrpE are required for fully efficient folding. Also involved, together with DnaK and GrpE, in the DNA replication of plasmids through activation of initiation proteins. This is Chaperone protein DnaJ from Streptococcus pyogenes serotype M6 (strain ATCC BAA-946 / MGAS10394).